Reading from the N-terminus, the 1574-residue chain is Disco-interacting protein 2 homolog B (1574 aa).

Phosphoserine occurs at positions 9, 50, and 53. Residues 12–130 (AVAALPPEVR…PMPTKRRSTF (119 aa)) form the DMAP1-binding domain. Residues 31-166 (LSEGDITQKG…AALSAALQQS (136 aa)) are disordered. Residues 52–62 (YSPQTQETDSI) show a composition bias toward polar residues. The span at 69–82 (QTPAPTAAQTSAPS) shows a compositional bias: low complexity. T70 bears the Phosphothreonine mark. Basic and acidic residues predominate over residues 91–103 (GARDERYRSDIHT). S99 carries the post-translational modification Phosphoserine. At T139 the chain carries Phosphothreonine. Residues S145, S147, and S152 each carry the phosphoserine modification. Residues 154 to 166 (RRQAALSAALQQS) show a composition bias toward low complexity. 3 positions are modified to phosphoserine: S177, S192, and S202. A disordered region spans residues 178–200 (IQGSSTSSSASSTLSHGEVKGTS). Residues 181 to 192 (SSTSSSASSTLS) are compositionally biased toward low complexity. Positions 217–244 (APPDVTATTSSSSSSLRPANIDLPPSGI) are disordered. Phosphoserine is present on S256.

The protein belongs to the DIP2 family. Interacts with alpha-tubulin. Highly expressed in brain and spinal cord (at protein level). In brain, expression is detected in the main olfactory bulb, cortex, lateral ventricle, cornu ammonis 1, cornu ammonis 3, dentate gyrus, striatum, cerebellar cortex and medial habenula. Expressed primarily in neurons including excitatory pyramidal neurons and inhibitory interneurons.

The protein localises to the cell projection. It localises to the dendrite. It is found in the axon. Its subcellular location is the perikaryon. Functionally, negatively regulates axonal outgrowth and is essential for normal synaptic transmission. Not required for regulation of axon polarity. Promotes acetylation of alpha-tubulin. The protein is Disco-interacting protein 2 homolog B (Dip2b) of Mus musculus (Mouse).